Consider the following 501-residue polypeptide: ATP synthase subunit alpha (501 aa).

Position 169–176 (169–176 (GDRQTGKT)) interacts with ATP.

The protein belongs to the ATPase alpha/beta chains family. As to quaternary structure, F-type ATPases have 2 components, CF(1) - the catalytic core - and CF(0) - the membrane proton channel. CF(1) has five subunits: alpha(3), beta(3), gamma(1), delta(1), epsilon(1). CF(0) has three main subunits: a(1), b(2) and c(9-12). The alpha and beta chains form an alternating ring which encloses part of the gamma chain. CF(1) is attached to CF(0) by a central stalk formed by the gamma and epsilon chains, while a peripheral stalk is formed by the delta and b chains.

It localises to the cell membrane. The catalysed reaction is ATP + H2O + 4 H(+)(in) = ADP + phosphate + 5 H(+)(out). Functionally, produces ATP from ADP in the presence of a proton gradient across the membrane. The alpha chain is a regulatory subunit. The sequence is that of ATP synthase subunit alpha from Streptococcus agalactiae serotype III (strain NEM316).